The primary structure comprises 736 residues: Zinc finger CCCH domain-containing protein 14 (736 aa).

The residue at position 1 (Met-1) is an N-acetylmethionine. Composition is skewed to polar residues over residues 78-103 (TEPSSLKSSDTNIFDSNVPSNKSNFS) and 131-145 (VSTSSQESKTTNVRQ). The segment at 78 to 146 (TEPSSLKSSD…ESKTTNVRQT (69 aa)) is disordered. Phosphoserine is present on Ser-85. Residues Lys-99, Lys-139, Lys-175, and Lys-198 each participate in a glycyl lysine isopeptide (Lys-Gly) (interchain with G-Cter in SUMO2) cross-link. Ser-240 is subject to Phosphoserine. Residue Lys-245 forms a Glycyl lysine isopeptide (Lys-Gly) (interchain with G-Cter in SUMO2) linkage. Ser-281 carries the post-translational modification Phosphoserine. Glycyl lysine isopeptide (Lys-Gly) (interchain with G-Cter in SUMO2) cross-links involve residues Lys-283 and Lys-295. Residues 310–350 (HDGEEEEEDDDYGSRTGSISSSVSVPAKPERRPSLPPSKQA) form a disordered region. Phosphoserine occurs at positions 327 and 343. Position 357 is an N6-acetyllysine; alternate (Lys-357). Lys-357 participates in a covalent cross-link: Glycyl lysine isopeptide (Lys-Gly) (interchain with G-Cter in SUMO2); alternate. Residue Lys-378 forms a Glycyl lysine isopeptide (Lys-Gly) (interchain with G-Cter in SUMO2) linkage. Phosphoserine occurs at positions 390 and 409. Residues 398 to 430 (VVQGQSRTPRISPPIKEEETKGDSVEKNQGTQQ) are disordered. A compositionally biased stretch (basic and acidic residues) spans 412-423 (IKEEETKGDSVE). A Glycyl lysine isopeptide (Lys-Gly) (interchain with G-Cter in SUMO2) cross-link involves residue Lys-413. At Ser-421 the chain carries Phosphoserine. Lys-489 participates in a covalent cross-link: Glycyl lysine isopeptide (Lys-Gly) (interchain with G-Cter in SUMO2). Phosphoserine is present on residues Ser-498, Ser-515, Ser-527, and Ser-620. 5 C3H1-type zinc fingers span residues 595-620 (EKLLERCKYWPACKNGDECAYHHPIS), 621-640 (PCKAFPNCKFAEKCLFVHPN), 641-656 (CKYDAKCTKPDCPFTH), 682-699 (CRYFPACKKMECPFYHPK), and 701-719 (CRFNTQCTRPDCTFYHPTI).

Belongs to the ZC3H14 family. In terms of assembly, homodimer; facilitating circular RNAs (circRNAs) formation. Associates with the spliceosome. Interacts with HOOK2. Interacts with ZFC3H1 in a RNase-sensitive manner.

The protein localises to the nucleus speckle. RNA-binding protein involved in the biogenesis of circular RNAs (circRNAs), which are produced by back-splicing circularization of pre-mRNAs. Acts by binding to both exon-intron boundary and 3'-UTR of pre-mRNAs to promote circRNA biogenesis through dimerization and the association with the spliceosome. Required for spermatogenesis via involvement in circRNA biogenesis. Regulates the pre-mRNA processing of ATP5MC1; preventing its degradation. Also binds the poly(A) tail of mRNAs; controlling poly(A) length in neuronal cells. This is Zinc finger CCCH domain-containing protein 14 (ZC3H14) from Macaca fascicularis (Crab-eating macaque).